A 524-amino-acid polypeptide reads, in one-letter code: Cytochrome P450 4F1 (524 aa).

Residues 15 to 35 (VAFPWQTLLLFGASWILAQIL) traverse the membrane as a helical segment. Heme-binding residues include glutamate 328 and cysteine 468.

This sequence belongs to the cytochrome P450 family. The cofactor is heme. As to expression, expressed in liver.

The protein localises to the endoplasmic reticulum membrane. The protein resides in the microsome membrane. The enzyme catalyses (5Z,8Z,11Z,14Z)-eicosatetraenoate + reduced [NADPH--hemoprotein reductase] + O2 = 20-hydroxy-(5Z,8Z,11Z,14Z)-eicosatetraenoate + oxidized [NADPH--hemoprotein reductase] + H2O + H(+). The catalysed reaction is 5-hydroxy-(6E,8Z,11Z,14Z)-eicosatetraenoate + reduced [NADPH--hemoprotein reductase] + O2 = 5,20-dihydroxy-(6E,8Z,11Z,14Z)-eicosatetraenoate + oxidized [NADPH--hemoprotein reductase] + H2O + H(+). It carries out the reaction 8-hydroxy-(5Z,9E,11Z,14Z)-eicosatetraenoate + reduced [NADPH--hemoprotein reductase] + O2 = 8,20-dihydroxy-(5Z,9E,11Z,14Z)-eicosatetraenoate + oxidized [NADPH--hemoprotein reductase] + H2O + H(+). It catalyses the reaction leukotriene B4 + reduced [NADPH--hemoprotein reductase] + O2 = 20-hydroxy-leukotriene B4 + oxidized [NADPH--hemoprotein reductase] + H2O + H(+). The enzyme catalyses 6-trans-leukotriene B4 + reduced [NADPH--hemoprotein reductase] + O2 = 20-hydroxy-6-trans-leukotriene B4 + oxidized [NADPH--hemoprotein reductase] + H2O + H(+). The catalysed reaction is lipoxin A4 + reduced [NADPH--hemoprotein reductase] + O2 = 20-hydroxy-lipoxin A4 + oxidized [NADPH--hemoprotein reductase] + H2O + H(+). Its function is as follows. A cytochrome P450 monooxygenase involved in the metabolism of arachidonic acid and its oxygenated derivatives. Mechanistically, uses molecular oxygen inserting one oxygen atom into a substrate, and reducing the second into a water molecule, with two electrons provided by NADPH via cytochrome P450 reductase (CPR; NADPH-ferrihemoprotein reductase). Participates in the conversion of arachidonic acid to omega-hydroxyeicosatetraenoic acid (20-HETE), a signaling molecule acting both as vasoconstrictive and natriuretic with overall effect on arterial blood pressure. May play a role in the oxidative inactivation of eicosanoids, including both pro-inflammatory and anti-inflammatory mediators such as leukotriene B4 (LTB4), lipoxin A4 (LXA4), and several HETEs. This is Cytochrome P450 4F1 from Rattus norvegicus (Rat).